Reading from the N-terminus, the 353-residue chain is CCN family member 3 (353 aa).

Residues 1–26 form the signal peptide; that stretch reads MEPGGGHSLPVLLLLLLLLLLRPSEV. Residues 29–103 enclose the IGFBP N-terminal domain; sequence REAPCPRPCG…GGGTGICMVL (75 aa). 6 disulfide bridges follow: Cys33-Cys59, Cys37-Cys61, Cys41-Cys62, Cys48-Cys65, Cys73-Cys87, and Cys79-Cys100. Positions 106–172 constitute a VWFC domain; that stretch reads DNCVFDGMIY…GECCEKWVCE (67 aa). Residues 203 to 248 form the TSP type-1 domain; that stretch reads NCIEQTTEWSACSRSCGMGFSTRVTNRNQQCEMVKQTRLCMMRPCE. 5 disulfide bridges follow: Cys260–Cys297, Cys277–Cys311, Cys288–Cys327, Cys291–Cys329, and Cys296–Cys333. In terms of domain architecture, CTCK spans 260–334; the sequence is CIRTKKSMKA…NTCVCHGNCP (75 aa). N-linked (GlcNAc...) asparagine glycosylation is present at Asn276.

This sequence belongs to the CCN family.

It is found in the secreted. The protein resides in the cytoplasm. Its subcellular location is the cell junction. It localises to the gap junction. Functionally, immediate-early protein likely to play a role in cell growth regulation. This is CCN family member 3 (CCN3) from Coturnix japonica (Japanese quail).